Here is a 333-residue protein sequence, read N- to C-terminus: Ketol-acid reductoisomerase (NADP(+)) (333 aa).

In terms of domain architecture, KARI N-terminal Rossmann spans 1 to 181 (MKVYYDQDAD…GGARSGVIET (181 aa)). NADP(+)-binding positions include 24–27 (YGSQ), R47, and 82–85 (DEVQ). H107 is an active-site residue. G133 serves as a coordination point for NADP(+). In terms of domain architecture, KARI C-terminal knotted spans 182-327 (TFREETETDL…KELRSMMPWL (146 aa)). D190, E194, E226, and E230 together coordinate Mg(2+). S251 contacts substrate.

It belongs to the ketol-acid reductoisomerase family. It depends on Mg(2+) as a cofactor.

It carries out the reaction (2R)-2,3-dihydroxy-3-methylbutanoate + NADP(+) = (2S)-2-acetolactate + NADPH + H(+). The catalysed reaction is (2R,3R)-2,3-dihydroxy-3-methylpentanoate + NADP(+) = (S)-2-ethyl-2-hydroxy-3-oxobutanoate + NADPH + H(+). It functions in the pathway amino-acid biosynthesis; L-isoleucine biosynthesis; L-isoleucine from 2-oxobutanoate: step 2/4. The protein operates within amino-acid biosynthesis; L-valine biosynthesis; L-valine from pyruvate: step 2/4. Functionally, involved in the biosynthesis of branched-chain amino acids (BCAA). Catalyzes an alkyl-migration followed by a ketol-acid reduction of (S)-2-acetolactate (S2AL) to yield (R)-2,3-dihydroxy-isovalerate. In the isomerase reaction, S2AL is rearranged via a Mg-dependent methyl migration to produce 3-hydroxy-3-methyl-2-ketobutyrate (HMKB). In the reductase reaction, this 2-ketoacid undergoes a metal-dependent reduction by NADPH to yield (R)-2,3-dihydroxy-isovalerate. The sequence is that of Ketol-acid reductoisomerase (NADP(+)) from Desulfovibrio desulfuricans (strain ATCC 27774 / DSM 6949 / MB).